We begin with the raw amino-acid sequence, 249 residues long: DNA repair protein RecO (249 aa).

This sequence belongs to the RecO family.

Functionally, involved in DNA repair and RecF pathway recombination. This is DNA repair protein RecO from Exiguobacterium sibiricum (strain DSM 17290 / CCUG 55495 / CIP 109462 / JCM 13490 / 255-15).